Here is a 664-residue protein sequence, read N- to C-terminus: Chaperone protein DnaK (664 aa).

A Phosphothreonine; by autocatalysis modification is found at threonine 201. The segment covering 574–592 has biased composition (basic and acidic residues); the sequence is LKEDASTEKIKEASEELSR. Residues 574–664 are disordered; sequence LKEDASTEKI…DVEIVDKPND (91 aa). Residues 600-617 are compositionally biased toward low complexity; that stretch reads AMQSQSASAAPSSAANAQ. Positions 639 to 649 are enriched in polar residues; sequence GNSTSASSNNE.

This sequence belongs to the heat shock protein 70 family.

In terms of biological role, acts as a chaperone. The sequence is that of Chaperone protein DnaK from Chlamydia felis (strain Fe/C-56) (Chlamydophila felis).